The sequence spans 304 residues: Acetylglutamate kinase (304 aa).

Residues 71–72 (GG), Arg-93, and Asn-193 contribute to the substrate site.

Belongs to the acetylglutamate kinase family. ArgB subfamily.

It is found in the cytoplasm. The enzyme catalyses N-acetyl-L-glutamate + ATP = N-acetyl-L-glutamyl 5-phosphate + ADP. Its pathway is amino-acid biosynthesis; L-arginine biosynthesis; N(2)-acetyl-L-ornithine from L-glutamate: step 2/4. Catalyzes the ATP-dependent phosphorylation of N-acetyl-L-glutamate. This is Acetylglutamate kinase from Streptomyces avermitilis (strain ATCC 31267 / DSM 46492 / JCM 5070 / NBRC 14893 / NCIMB 12804 / NRRL 8165 / MA-4680).